Reading from the N-terminus, the 191-residue chain is Lipid A acyltransferase PagP (191 aa).

The N-terminal stretch at 1–26 is a signal peptide; it reads MLKVNKYVILIIAFVSQMMFSTTAQA. Catalysis depends on residues H63, D106, and S107.

This sequence belongs to the lipid A palmitoyltransferase family. In terms of assembly, homodimer.

The protein resides in the cell outer membrane. The enzyme catalyses a lipid A + a 1,2-diacyl-sn-glycero-3-phosphocholine = a hepta-acyl lipid A + a 2-acyl-sn-glycero-3-phosphocholine. The catalysed reaction is a lipid IVA + a 1,2-diacyl-sn-glycero-3-phosphocholine = a lipid IVB + a 2-acyl-sn-glycero-3-phosphocholine. It catalyses the reaction a lipid IIA + a 1,2-diacyl-sn-glycero-3-phosphocholine = a lipid IIB + a 2-acyl-sn-glycero-3-phosphocholine. In terms of biological role, transfers a fatty acid residue from the sn-1 position of a phospholipid to the N-linked hydroxyfatty acid chain on the proximal unit of lipid A or its precursors. The polypeptide is Lipid A acyltransferase PagP (Enterobacter lignolyticus (strain SCF1)).